A 275-amino-acid polypeptide reads, in one-letter code: MSAPVTRKRLTPKVIQAMKGECPIVSLTAYTTPVARLLDPHCDLLLVGDSLGMVLYGMESTLAVTLDMMIMHGQAVMRGTSHACVIVDMPFGSYQESKEQAFRNAARVMQETGCDGVKLEGGEEMAETVAFLVRRGIPVFGHVGLMPQQVNTVGGFRSLGRGDDEVGKIRRDAQAIAQAGAFAVVIEGTVEPLAREITALIDIPTVGIGASSACDGQVLVSDDMLGLFQDFTPRFVKRFAHLAPQVSQAAEAYAEEVRARRFPGPEHVFGAKPGA.

2 residues coordinate Mg(2+): D49 and D88. Residues 49 to 50, D88, and K118 each bind 3-methyl-2-oxobutanoate; that span reads DS. E120 serves as a coordination point for Mg(2+). E187 functions as the Proton acceptor in the catalytic mechanism.

Belongs to the PanB family. In terms of assembly, homodecamer; pentamer of dimers. Mg(2+) is required as a cofactor.

The protein localises to the cytoplasm. The enzyme catalyses 3-methyl-2-oxobutanoate + (6R)-5,10-methylene-5,6,7,8-tetrahydrofolate + H2O = 2-dehydropantoate + (6S)-5,6,7,8-tetrahydrofolate. It participates in cofactor biosynthesis; (R)-pantothenate biosynthesis; (R)-pantoate from 3-methyl-2-oxobutanoate: step 1/2. Catalyzes the reversible reaction in which hydroxymethyl group from 5,10-methylenetetrahydrofolate is transferred onto alpha-ketoisovalerate to form ketopantoate. In Brucella suis (strain ATCC 23445 / NCTC 10510), this protein is 3-methyl-2-oxobutanoate hydroxymethyltransferase.